Here is a 622-residue protein sequence, read N- to C-terminus: Wall-associated receptor kinase-like 21 (622 aa).

Positions 1–21 are cleaved as a signal peptide; it reads MAETPQPYLIFVFFVFTLTVA. Residues 22 to 247 lie on the Extracellular side of the membrane; the sequence is TQTTGSVKCK…LVYKRKGLHK (226 aa). Asn50, Asn114, Asn131, Asn160, and Asn195 each carry an N-linked (GlcNAc...) asparagine glycan. The helical transmembrane segment at 248 to 268 threads the bilayer; it reads LVVLGTAGILVGVLVIVVLIA. The Cytoplasmic segment spans residues 269 to 622; that stretch reads TYFFRNKQSA…MKRQQSFPRE (354 aa). Positions 314–594 constitute a Protein kinase domain; it reads FSDKNMLGTG…EITEDLHRIK (281 aa). ATP is bound by residues 320 to 328 and Lys342; that span reads LGTGAYGTV. Catalysis depends on Asp439, which acts as the Proton acceptor.

This sequence belongs to the protein kinase superfamily. Ser/Thr protein kinase family.

The protein localises to the membrane. The catalysed reaction is L-seryl-[protein] + ATP = O-phospho-L-seryl-[protein] + ADP + H(+). It carries out the reaction L-threonyl-[protein] + ATP = O-phospho-L-threonyl-[protein] + ADP + H(+). Its function is as follows. Serine/threonine-protein kinase that may function as a signaling receptor of extracellular matrix component. In Arabidopsis thaliana (Mouse-ear cress), this protein is Wall-associated receptor kinase-like 21 (WAKL21).